A 120-amino-acid polypeptide reads, in one-letter code: Large ribosomal subunit protein bL17 (120 aa).

This sequence belongs to the bacterial ribosomal protein bL17 family. Part of the 50S ribosomal subunit. Contacts protein L32.

This Geobacillus sp. (strain WCH70) protein is Large ribosomal subunit protein bL17.